The chain runs to 231 residues: Very-long-chain (3R)-3-hydroxyacyl-CoA dehydratase 4 (231 aa).

Residues 1–19 (MGPVALPTWLQPRYRKNAY) are Cytoplasmic-facing. The chain crosses the membrane as a helical span at residues 20–40 (LFIYYLIQFCGHSWIFTNMTV). Over 41–56 (RFFSFGKDSMVDTFYA) the chain is Lumenal. A helical transmembrane segment spans residues 57–77 (IGLVMQLCQSISLLELLHIYV). Topologically, residues 78 to 112 (GIESNHLLPRILQLTERIIVLFMVITSQEEVQEKY) are cytoplasmic. Residues 113–133 (VVCVLFIFRNLLDMVRYTYSM) traverse the membrane as a helical segment. Residues 134–135 (LS) lie on the Lumenal side of the membrane. Residues 136 to 156 (VIGISYAVLTWFSQTLWMPIY) traverse the membrane as a helical segment. Tyrosine 156 is an active-site residue. Residue proline 157 is a topological domain, cytoplasmic. The helical transmembrane segment at 158-178 (LCVLAEAFTIYQSLPYFESFG) threads the bilayer. Glutamate 163 is an active-site residue. Residues 179 to 189 (TYSTKLPFDLS) are Lumenal-facing. Residues 190-210 (FYFPYVLKIYLMMLFVGMYFT) form a helical membrane-spanning segment. Topologically, residues 211–231 (YNHLYSERRDILRVFPNKKKM) are cytoplasmic.

The protein belongs to the very long-chain fatty acids dehydratase HACD family. In terms of assembly, may interact with enzymes of the ELO family (including ELOVL1); with those enzymes that mediate condensation, the first of the four steps of the reaction cycle responsible for fatty acids elongation, may be part of a larger fatty acids elongase complex.

Its subcellular location is the endoplasmic reticulum membrane. It carries out the reaction a very-long-chain (3R)-3-hydroxyacyl-CoA = a very-long-chain (2E)-enoyl-CoA + H2O. The enzyme catalyses (3R)-hydroxyhexadecanoyl-CoA = (2E)-hexadecenoyl-CoA + H2O. The protein operates within lipid metabolism; fatty acid biosynthesis. Functionally, catalyzes the third of the four reactions of the long-chain fatty acids elongation cycle. This endoplasmic reticulum-bound enzymatic process, allows the addition of two carbons to the chain of long- and very long-chain fatty acids/VLCFAs per cycle. This enzyme catalyzes the dehydration of the 3-hydroxyacyl-CoA intermediate into trans-2,3-enoyl-CoA, within each cycle of fatty acid elongation. Thereby, it participates in the production of VLCFAs of different chain lengths that are involved in multiple biological processes as precursors of membrane lipids and lipid mediators. This chain is Very-long-chain (3R)-3-hydroxyacyl-CoA dehydratase 4, found in Bos taurus (Bovine).